The chain runs to 274 residues: Dermonecrotic toxin SdSicTox-betaIIB2ii (274 aa).

His5 is a catalytic residue. Positions 25 and 27 each coordinate Mg(2+). His41 (nucleophile) is an active-site residue. 2 disulfide bridges follow: Cys45–Cys51 and Cys47–Cys190. Asp85 contacts Mg(2+).

Belongs to the arthropod phospholipase D family. Class II subfamily. The cofactor is Mg(2+). Expressed by the venom gland.

The protein resides in the secreted. It carries out the reaction an N-(acyl)-sphingosylphosphocholine = an N-(acyl)-sphingosyl-1,3-cyclic phosphate + choline. The catalysed reaction is an N-(acyl)-sphingosylphosphoethanolamine = an N-(acyl)-sphingosyl-1,3-cyclic phosphate + ethanolamine. It catalyses the reaction a 1-acyl-sn-glycero-3-phosphocholine = a 1-acyl-sn-glycero-2,3-cyclic phosphate + choline. The enzyme catalyses a 1-acyl-sn-glycero-3-phosphoethanolamine = a 1-acyl-sn-glycero-2,3-cyclic phosphate + ethanolamine. Its function is as follows. Dermonecrotic toxins cleave the phosphodiester linkage between the phosphate and headgroup of certain phospholipids (sphingolipid and lysolipid substrates), forming an alcohol (often choline) and a cyclic phosphate. This toxin acts on sphingomyelin (SM). It may also act on ceramide phosphoethanolamine (CPE), lysophosphatidylcholine (LPC) and lysophosphatidylethanolamine (LPE), but not on lysophosphatidylserine (LPS), and lysophosphatidylglycerol (LPG). It acts by transphosphatidylation, releasing exclusively cyclic phosphate products as second products. Induces dermonecrosis, hemolysis, increased vascular permeability, edema, inflammatory response, and platelet aggregation. This is Dermonecrotic toxin SdSicTox-betaIIB2ii from Sicarius cf. damarensis (strain GJB-2008) (Six-eyed sand spider).